We begin with the raw amino-acid sequence, 1582 residues long: SET-binding protein (1582 aa).

Disordered regions lie at residues 1–76, 124–246, 278–416, and 446–513; these read MEPR…WVAG, ITIK…KVPA, LLGS…KRQS, and SNSE…KLSE. Positions 18 to 27 are enriched in polar residues; the sequence is EFLQGSSSRS. A compositionally biased stretch (basic and acidic residues) spans 57 to 74; that stretch reads GSGRDVDCNSNADSEKWV. Composition is skewed to polar residues over residues 126–141 and 213–229; these read IKQS…GKNS and MEWS…QNCF. Positions 278 to 298 are enriched in low complexity; the sequence is LLGSVVPSPSSHNSPATPSSS. Residues 356–365 are compositionally biased toward basic and acidic residues; the sequence is ETTEGKREAY. Polar residues predominate over residues 368–388; that stretch reads DSAQEASPARQSISSVSNPEN. A compositionally biased stretch (basic and acidic residues) spans 450–465; sequence GSKKDPRVPKLGKMIE. Residues 575-587 constitute a DNA-binding region (a.T hook 1); the sequence is KKKRGRPKKQPLL. Disordered regions lie at residues 595–617 and 709–787; these read GTST…RKRR and RGTI…ASTE. The segment covering 770–787 has biased composition (polar residues); sequence LSTQLGGSNGNLSPASTE. Lys-808 carries the N6-acetyllysine modification. The segment covering 845–871 has biased composition (polar residues); it reads SPVSESHSEETIPSDSGIGTDNNSTSD. A disordered region spans residues 845 to 880; the sequence is SPVSESHSEETIPSDSGIGTDNNSTSDQAEKSSESR. The segment at residues 1007-1019 is a DNA-binding region (a.T hook 2); the sequence is KKKRGRPAKTNDT. Disordered stretches follow at residues 1128-1155, 1182-1215, 1236-1265, 1429-1461, 1470-1489, and 1507-1582; these read VGGA…DRIL, SGSD…VSKN, AKDK…TRSE, QRQS…RDQM, LPSK…EPAS, and EAPP…DVLP. The span at 1137–1150 shows a compositional bias: basic residues; it reads RLHKRKHKHKRKHK. Basic and acidic residues predominate over residues 1182–1196; it reads SGSDKELPLVSEKSK. Residues 1439 to 1448 are compositionally biased toward basic residues; that stretch reads VKKRRGRPRK. The a.T hook 3 DNA-binding region spans 1440–1452; the sequence is KKRRGRPRKQPSQ. Composition is skewed to pro residues over residues 1509-1533 and 1546-1559; these read PPLP…PPLP and QPPA…PQPL.

Interacts with SET.

Its subcellular location is the nucleus. In Mus musculus (Mouse), this protein is SET-binding protein (Setbp1).